The chain runs to 135 residues: Large ribosomal subunit protein uL22 (135 aa).

The disordered stretch occupies residues 112 to 135; the sequence is KKPEKKKLKAKSAKTEEAPKAAEV. Residues 124–135 show a composition bias toward basic and acidic residues; sequence AKTEEAPKAAEV.

Belongs to the universal ribosomal protein uL22 family. In terms of assembly, part of the 50S ribosomal subunit.

Its function is as follows. This protein binds specifically to 23S rRNA; its binding is stimulated by other ribosomal proteins, e.g. L4, L17, and L20. It is important during the early stages of 50S assembly. It makes multiple contacts with different domains of the 23S rRNA in the assembled 50S subunit and ribosome. In terms of biological role, the globular domain of the protein is located near the polypeptide exit tunnel on the outside of the subunit, while an extended beta-hairpin is found that lines the wall of the exit tunnel in the center of the 70S ribosome. In Brachyspira hyodysenteriae (strain ATCC 49526 / WA1), this protein is Large ribosomal subunit protein uL22.